A 245-amino-acid polypeptide reads, in one-letter code: tRNA (guanine-N(1)-)-methyltransferase (245 aa).

Residues Gly-111 and 131 to 136 (MGDYVL) each bind S-adenosyl-L-methionine.

This sequence belongs to the RNA methyltransferase TrmD family. Homodimer.

The protein localises to the cytoplasm. It catalyses the reaction guanosine(37) in tRNA + S-adenosyl-L-methionine = N(1)-methylguanosine(37) in tRNA + S-adenosyl-L-homocysteine + H(+). In terms of biological role, specifically methylates guanosine-37 in various tRNAs. The polypeptide is tRNA (guanine-N(1)-)-methyltransferase (Staphylococcus epidermidis (strain ATCC 35984 / DSM 28319 / BCRC 17069 / CCUG 31568 / BM 3577 / RP62A)).